Consider the following 164-residue polypeptide: MDLITPEIGLFFWQTIVFLILLFLMAKFAWKPILGSVRNREQSINDALASAEKARKEMQNLQSDNEQLLKEARAERDAILKEARELKEKVITDASDEAKVKADKIVADAKRSIELEKQSAMAELKNHVAELSVEIAEKIVRKELSGKNEQHQMIEKMIGDAKLN.

A helical membrane pass occupies residues 8 to 28; the sequence is IGLFFWQTIVFLILLFLMAKF.

It belongs to the ATPase B chain family. F-type ATPases have 2 components, F(1) - the catalytic core - and F(0) - the membrane proton channel. F(1) has five subunits: alpha(3), beta(3), gamma(1), delta(1), epsilon(1). F(0) has three main subunits: a(1), b(2) and c(10-14). The alpha and beta chains form an alternating ring which encloses part of the gamma chain. F(1) is attached to F(0) by a central stalk formed by the gamma and epsilon chains, while a peripheral stalk is formed by the delta and b chains.

It localises to the cell membrane. Its function is as follows. F(1)F(0) ATP synthase produces ATP from ADP in the presence of a proton or sodium gradient. F-type ATPases consist of two structural domains, F(1) containing the extramembraneous catalytic core and F(0) containing the membrane proton channel, linked together by a central stalk and a peripheral stalk. During catalysis, ATP synthesis in the catalytic domain of F(1) is coupled via a rotary mechanism of the central stalk subunits to proton translocation. Component of the F(0) channel, it forms part of the peripheral stalk, linking F(1) to F(0). The polypeptide is ATP synthase subunit b (Christiangramia forsetii (strain DSM 17595 / CGMCC 1.15422 / KT0803) (Gramella forsetii)).